We begin with the raw amino-acid sequence, 872 residues long: Telomerase component p95 (872 aa).

Disordered regions lie at residues 55–75 (NQDQDGNSGNDDDDEENNSNK) and 471–492 (KNNKNQEETPETKDETPSESTS). Residues 474 to 486 (KNQEETPETKDET) show a composition bias toward basic and acidic residues.

As to quaternary structure, telomerase consist of two subunit, p80 and p95 that form a 1:1:1 complex with the 159 nt telomerase RNA.

Its subcellular location is the nucleus. It is found in the chromosome. It localises to the telomere. It catalyses the reaction DNA(n) + a 2'-deoxyribonucleoside 5'-triphosphate = DNA(n+1) + diphosphate. Its function is as follows. Ribonucleoprotein DNA polymerase that catalyzes the de novo synthesis of telomeric simple sequence repeats. Subunit p95 contains some or all of the template-independent primer DNA-binding site termed the anchor site. In Tetrahymena thermophila, this protein is Telomerase component p95.